Reading from the N-terminus, the 154-residue chain is Ascorbate-specific PTS system EIIA component (154 aa).

The PTS EIIA type-2 domain occupies 6-150; the sequence is SLAENNSIRL…QEVLDLIDRT (145 aa). The active-site Tele-phosphohistidine intermediate is H68. H68 bears the Phosphohistidine mark.

The protein resides in the cytoplasm. Its function is as follows. The phosphoenolpyruvate-dependent sugar phosphotransferase system (sugar PTS), a major carbohydrate active transport system, catalyzes the phosphorylation of incoming sugar substrates concomitantly with their translocation across the cell membrane. The enzyme II UlaABC PTS system is involved in ascorbate transport. This is Ascorbate-specific PTS system EIIA component (ulaC) from Salmonella paratyphi A (strain ATCC 9150 / SARB42).